We begin with the raw amino-acid sequence, 396 residues long: Mannonate dehydratase (396 aa).

It belongs to the mannonate dehydratase family. Requires Fe(2+) as cofactor. Mn(2+) serves as cofactor.

It carries out the reaction D-mannonate = 2-dehydro-3-deoxy-D-gluconate + H2O. It functions in the pathway carbohydrate metabolism; pentose and glucuronate interconversion. Its function is as follows. Catalyzes the dehydration of D-mannonate. The polypeptide is Mannonate dehydratase (Enterobacter sp. (strain 638)).